Here is a 180-residue protein sequence, read N- to C-terminus: ATP-dependent protease subunit HslV (180 aa).

Thr-5 is a catalytic residue. Positions 165, 168, and 171 each coordinate Na(+).

This sequence belongs to the peptidase T1B family. HslV subfamily. A double ring-shaped homohexamer of HslV is capped on each side by a ring-shaped HslU homohexamer. The assembly of the HslU/HslV complex is dependent on binding of ATP.

It localises to the cytoplasm. It carries out the reaction ATP-dependent cleavage of peptide bonds with broad specificity.. Its activity is regulated as follows. Allosterically activated by HslU binding. Protease subunit of a proteasome-like degradation complex believed to be a general protein degrading machinery. The chain is ATP-dependent protease subunit HslV from Helicobacter pylori (strain HPAG1).